The sequence spans 448 residues: Probable glycine dehydrogenase (decarboxylating) subunit 1 (448 aa).

It belongs to the GcvP family. N-terminal subunit subfamily. The glycine cleavage system is composed of four proteins: P, T, L and H. In this organism, the P 'protein' is a heterodimer of two subunits.

It catalyses the reaction N(6)-[(R)-lipoyl]-L-lysyl-[glycine-cleavage complex H protein] + glycine + H(+) = N(6)-[(R)-S(8)-aminomethyldihydrolipoyl]-L-lysyl-[glycine-cleavage complex H protein] + CO2. Its function is as follows. The glycine cleavage system catalyzes the degradation of glycine. The P protein binds the alpha-amino group of glycine through its pyridoxal phosphate cofactor; CO(2) is released and the remaining methylamine moiety is then transferred to the lipoamide cofactor of the H protein. This chain is Probable glycine dehydrogenase (decarboxylating) subunit 1, found in Geobacillus kaustophilus (strain HTA426).